Here is a 136-residue protein sequence, read N- to C-terminus: ATP synthase epsilon chain (136 aa).

Belongs to the ATPase epsilon chain family. F-type ATPases have 2 components, CF(1) - the catalytic core - and CF(0) - the membrane proton channel. CF(1) has five subunits: alpha(3), beta(3), gamma(1), delta(1), epsilon(1). CF(0) has three main subunits: a, b and c.

It localises to the cell inner membrane. Functionally, produces ATP from ADP in the presence of a proton gradient across the membrane. The protein is ATP synthase epsilon chain of Agrobacterium fabrum (strain C58 / ATCC 33970) (Agrobacterium tumefaciens (strain C58)).